The primary structure comprises 217 residues: GRB2-related adapter protein (217 aa).

One can recognise an SH3 1 domain in the interval Met1 to His58. The SH2 domain maps to Trp60–Leu154. The SH3 2 domain occupies Pro158–Leu217.

The protein belongs to the GRB2/sem-5/DRK family. Associates through its SH2 domain with ligand-activated receptors for stem cell factor (KIT) and erythropoietin (EPOR). Also forms a stable complex with the Bcr-Abl oncoprotein. GRAP is associated with the Ras guanine nucleotide exchange factor SOS1, primarily through its N-terminal SH3 domain. Interacts with phosphorylated LAT upon TCR activation. Interacts with SHB.

The protein resides in the membrane. The protein localises to the synapse. In terms of biological role, couples signals from receptor and cytoplasmic tyrosine kinases to the Ras signaling pathway. Plays a role in the inner ear and in hearing. The chain is GRB2-related adapter protein from Homo sapiens (Human).